Here is an 889-residue protein sequence, read N- to C-terminus: Oxysterol-binding protein-related protein 8 (889 aa).

At Met1 the chain carries N-acetylmethionine. The tract at residues 1-129 (MEGGLADGEP…SLKVQKKNYR (129 aa)) is disordered. At Ser14 the chain carries Phosphoserine. Polar residues-rich tracts occupy residues 28–46 (VVAN…MSQR) and 62–71 (PSLSPASPHS). 2 positions are modified to phosphoserine: Ser65 and Ser68. Basic and acidic residues-rich tracts occupy residues 73-88 (GFER…KDES), 95-109 (SKSE…EKDS), and 116-129 (TKKE…KNYR). The PH domain occupies 148 to 265 (VIVMADWLKI…WMDALELALK (118 aa)). Residues Ser314, Ser328, and Ser342 each carry the phosphoserine modification. Positions 322–336 (KDQDMYSDKSDKEND) are enriched in basic and acidic residues. A disordered region spans residues 322–399 (KDQDMYSDKS…AGEASQTETV (78 aa)). Residues 346–363 (VMGKSEESDTDTSERQDD) show a composition bias toward basic and acidic residues. A 1,2-diacyl-sn-glycero-3-phospho-(1D-myo-inositol 4-phosphate) contacts are provided by residues 420-425 (LSKVVL), 482-485 (KPYN), and 514-515 (HH). A 1,2-diacyl-sn-glycero-3-phospho-L-serine contacts are provided by residues 420 to 425 (LSKVVL) and Asn485. Ser540 contributes to the a 1,2-diacyl-sn-glycero-3-phospho-L-serine binding site. Residues Lys706, Glu710, and Arg714 each contribute to the a 1,2-diacyl-sn-glycero-3-phospho-(1D-myo-inositol 4-phosphate) site. Residues 771 to 823 (KHRTPMVSVPKMKHKPTRQQKKVAKGYSSPEPDIQDSSGSEAQSVKPSTRRKK) form a disordered region. Residues 781–794 (KMKHKPTRQQKKVA) show a composition bias toward basic residues. Residues 805 to 817 (QDSSGSEAQSVKP) show a composition bias toward polar residues. Residues Ser807, Ser808, Ser810, and Ser814 each carry the phosphoserine modification. Residues 871–888 (YFIIFLLILLQVIINFMF) form a helical membrane-spanning segment.

It belongs to the OSBP family. Interacts with SPAG5. Interacts with NUP62. Widely expressed. Expressed at higher level in macrophages.

It localises to the endoplasmic reticulum membrane. Its subcellular location is the nucleus membrane. In terms of biological role, lipid transporter involved in lipid countertransport between the endoplasmic reticulum and the plasma membrane: specifically exchanges phosphatidylserine with phosphatidylinositol 4-phosphate (PI4P), delivering phosphatidylserine to the plasma membrane in exchange for PI4P, which is degraded by the SAC1/SACM1L phosphatase in the endoplasmic reticulum. Binds phosphatidylserine and PI4P in a mutually exclusive manner. Binds oxysterol, 25-hydroxycholesterol and cholesterol. This Homo sapiens (Human) protein is Oxysterol-binding protein-related protein 8 (OSBPL8).